Reading from the N-terminus, the 377-residue chain is Chaperone protein DnaJ (377 aa).

In terms of domain architecture, J spans aspartate 5 to glycine 70. The segment at glycine 132 to serine 210 adopts a CR-type zinc-finger fold. Zn(2+) contacts are provided by cysteine 145, cysteine 148, cysteine 162, cysteine 165, cysteine 184, cysteine 187, cysteine 198, and cysteine 201. 4 CXXCXGXG motif repeats span residues cysteine 145 to glycine 152, cysteine 162 to glycine 169, cysteine 184 to glycine 191, and cysteine 198 to glycine 205.

The protein belongs to the DnaJ family. Homodimer. The cofactor is Zn(2+).

Its subcellular location is the cytoplasm. Participates actively in the response to hyperosmotic and heat shock by preventing the aggregation of stress-denatured proteins and by disaggregating proteins, also in an autonomous, DnaK-independent fashion. Unfolded proteins bind initially to DnaJ; upon interaction with the DnaJ-bound protein, DnaK hydrolyzes its bound ATP, resulting in the formation of a stable complex. GrpE releases ADP from DnaK; ATP binding to DnaK triggers the release of the substrate protein, thus completing the reaction cycle. Several rounds of ATP-dependent interactions between DnaJ, DnaK and GrpE are required for fully efficient folding. Also involved, together with DnaK and GrpE, in the DNA replication of plasmids through activation of initiation proteins. The chain is Chaperone protein DnaJ from Edwardsiella ictaluri (strain 93-146).